Reading from the N-terminus, the 163-residue chain is uncharacterized protein (163 aa).

The tract at residues 1 to 54 is disordered; sequence MGKSARLRRSQTSSPENVLLGKDSSDDPYRSDSETESNSSSGTESNMSSDSTTS. Positions 23–33 are enriched in basic and acidic residues; sequence DSSDDPYRSDS. Positions 36 to 52 are enriched in low complexity; that stretch reads ESNSSSGTESNMSSDST. A coiled-coil region spans residues 69–143; it reads LRTELAEMEM…VEELESSTRE (75 aa).

This is an uncharacterized protein from Arabidopsis thaliana (Mouse-ear cress).